We begin with the raw amino-acid sequence, 251 residues long: Triosephosphate isomerase (251 aa).

9 to 11 contacts substrate; sequence NWK. The active-site Electrophile is the histidine 95. The active-site Proton acceptor is the glutamate 167. Substrate-binding positions include glycine 173, serine 212, and 233–234; that span reads GG.

This sequence belongs to the triosephosphate isomerase family. In terms of assembly, homodimer.

Its subcellular location is the cytoplasm. The catalysed reaction is D-glyceraldehyde 3-phosphate = dihydroxyacetone phosphate. Its pathway is carbohydrate biosynthesis; gluconeogenesis. It participates in carbohydrate degradation; glycolysis; D-glyceraldehyde 3-phosphate from glycerone phosphate: step 1/1. Functionally, involved in the gluconeogenesis. Catalyzes stereospecifically the conversion of dihydroxyacetone phosphate (DHAP) to D-glyceraldehyde-3-phosphate (G3P). In Pseudomonas putida (strain GB-1), this protein is Triosephosphate isomerase.